The following is a 668-amino-acid chain: tRNA 5-methylaminomethyl-2-thiouridine biosynthesis bifunctional protein MnmC (668 aa).

The tract at residues 1–245 is tRNA (mnm(5)s(2)U34)-methyltransferase; it reads MKHYSIQPAN…KREMLCGVME (245 aa). Positions 270–668 are FAD-dependent cmnm(5)s(2)U34 oxidoreductase; that stretch reads IGGGIASALL…LLKGKAVKAG (399 aa).

In the N-terminal section; belongs to the methyltransferase superfamily. tRNA (mnm(5)s(2)U34)-methyltransferase family. This sequence in the C-terminal section; belongs to the DAO family. The cofactor is FAD.

The protein localises to the cytoplasm. It carries out the reaction 5-aminomethyl-2-thiouridine(34) in tRNA + S-adenosyl-L-methionine = 5-methylaminomethyl-2-thiouridine(34) in tRNA + S-adenosyl-L-homocysteine + H(+). Functionally, catalyzes the last two steps in the biosynthesis of 5-methylaminomethyl-2-thiouridine (mnm(5)s(2)U) at the wobble position (U34) in tRNA. Catalyzes the FAD-dependent demodification of cmnm(5)s(2)U34 to nm(5)s(2)U34, followed by the transfer of a methyl group from S-adenosyl-L-methionine to nm(5)s(2)U34, to form mnm(5)s(2)U34. The protein is tRNA 5-methylaminomethyl-2-thiouridine biosynthesis bifunctional protein MnmC of Escherichia coli O9:H4 (strain HS).